We begin with the raw amino-acid sequence, 474 residues long: bZIP transcription factor hapX (474 aa).

Polar residues predominate over residues 1 to 10 (MSTSAGTPTS). The segment at 1–82 (MSTSAGTPTS…RKAQNRAAQR (82 aa)) is disordered. The bZIP domain maps to 67-108 (DTPPTKRKAQNRAAQRAFRERRAARVGELEEQIKKIEEENER). Positions 72-91 (KRKAQNRAAQRAFRERRAAR) are basic motif. The segment at 95 to 102 (LEEQIKKI) is leucine-zipper. Disordered regions lie at residues 201 to 242 (QMQT…TDFT), 282 to 317 (EDQPSDRSNQPSQLTKLPPIQNISQFTPPPSEGDVL), and 429 to 449 (TLPNPQNLNPDRRRDQNLTNR). A compositionally biased stretch (polar residues) spans 287–307 (DRSNQPSQLTKLPPIQNISQF).

This sequence belongs to the bZIP family. YAP subfamily.

The protein localises to the nucleus. In terms of biological role, iron regulator crucial for the adaptation to iron starvation and iron excess, but is dispensable for virulence. SreA represses the expression of hapX and the siderophore system during iron sufficient conditions by an iron-sensing mechanism, while hapX represses sreA and activates the siderophore system during iron-limiting conditions, resulting in efficient iron uptake and inhibition of iron-consuming pathways. HapX targets include genes encoding a number of key iron-regulated factors such as the vacuolar iron importer cccA, as well as hemA, cycA and lysF involved in heme biosynthesis, respiration and lysine biosynthesis, respectively. Activation of the vacuolar iron importer cccA during high iron conditions is essential for iron detoxification. The chain is bZIP transcription factor hapX from Arthroderma benhamiae (strain ATCC MYA-4681 / CBS 112371) (Trichophyton mentagrophytes).